A 657-amino-acid chain; its full sequence is C4-dicarboxylate transport sensor protein DctS (657 aa).

Topologically, residues 1 to 26 (MRDTTGGPAGAEVWTVPGLLGARKLD) are cytoplasmic. Residues 27–51 (LLALIPLVAIVALMTLVGALLFAVA) traverse the membrane as a helical segment. At 52–252 (QSDANRARAK…AYDAPDAFGN (201 aa)) the chain is on the periplasmic side. The chain crosses the membrane as a helical span at residues 253–273 (AALLAAIGALSVFAVLAMVVL). Residues 274 to 657 (HRNALRRRMA…LPVPQEGAPA (384 aa)) are Cytoplasmic-facing. Residues 289–361 (AEMAFRRAME…ARQRQLIEGQ (73 aa)) enclose the PAS domain. A PAC domain is found at 365–417 (QAFETRFRRSDGSEIEVQVFEAPLIDAGGRHRGWMGSVIDITQAKQAARLARA). The interval 407–422 (QAKQAARLARAQDESL) is inter-domain linker. A Histidine kinase domain is found at 437-652 (TLAHELNQPL…VFTVTLPVPQ (216 aa)). Phosphohistidine; by autocatalysis is present on histidine 440.

The protein localises to the cell inner membrane. The enzyme catalyses ATP + protein L-histidine = ADP + protein N-phospho-L-histidine.. Functionally, member of the two-component regulatory system DctS/DctR involved in the transport of C4-dicarboxylates. DctS functions as a membrane-associated protein kinase that phosphorylates DctR in response to environmental signals. The chain is C4-dicarboxylate transport sensor protein DctS (dctS) from Rhodobacter capsulatus (Rhodopseudomonas capsulata).